The chain runs to 164 residues: Transcriptional regulator MraZ (164 aa).

2 SpoVT-AbrB domains span residues 7–60 and 83–126; these read HYTN…EIDG and SEIL…EPGR. A disordered region spans residues 144 to 164; that stretch reads QLSARHAAPDAPPLRSHGARE.

The protein belongs to the MraZ family. Forms oligomers.

The protein localises to the cytoplasm. It is found in the nucleoid. This Methylocella silvestris (strain DSM 15510 / CIP 108128 / LMG 27833 / NCIMB 13906 / BL2) protein is Transcriptional regulator MraZ.